The chain runs to 561 residues: Putative transport protein YbjL (561 aa).

The next 5 helical transmembrane spans lie at 8–28 (LLNG…LCLG), 32–52 (LGSV…LLGQ), 66–86 (FMLF…SIFF), 94–114 (MLAL…GKLF), and 158–178 (NLSL…IVGA). RCK C-terminal domains follow at residues 200–288 (RGLD…SFRN) and 292–373 (VFDR…RIGF). The next 5 membrane-spanning stretches (helical) occupy residues 383 to 403 (LLAF…TFQF), 406 to 426 (FSFG…LGFL), 447 to 467 (FGLM…ISNG), 475 to 495 (MLIA…LFGA), and 540 to 560 (AIAN…WPGL).

Belongs to the AAE transporter (TC 2.A.81) family. YbjL subfamily.

The protein resides in the cell membrane. The polypeptide is Putative transport protein YbjL (Salmonella typhi).